Consider the following 130-residue polypeptide: Small ribosomal subunit protein uS11c (130 aa).

The protein belongs to the universal ribosomal protein uS11 family. As to quaternary structure, part of the 30S ribosomal subunit.

The protein resides in the plastid. It is found in the chloroplast. This chain is Small ribosomal subunit protein uS11c, found in Oedogonium cardiacum (Filamentous green alga).